The chain runs to 1669 residues: Formin-like protein 12 (1669 aa).

Positions 5-193 (RRLFYRKPPD…QYICKMDDEL (189 aa)) constitute a Phosphatase tensin-type domain. C126 (phosphocysteine intermediate) is an active-site residue. The 140-residue stretch at 199-338 (PIPFTLDCVI…FKAEVLFSEF (140 aa)) folds into the C2 tensin-type domain. Disordered stretches follow at residues 688-709 (QGSSFQANGDPTCANTSTDANE), 1025-1240 (DAGP…GHGL), and 1631-1669 (IEADKKKAQKEAEKEANQDRTPVKSKDGLVDRSPRSPFK). The span at 1036–1050 (LEWKRCPHHPPERPH) shows a compositional bias: basic and acidic residues. Pro residues-rich tracts occupy residues 1060–1069 (PSPPSPPPPQ), 1098–1127 (APPPPSIGAGAPPPPPPPGGITGVPPPPPI), 1136–1190 (PPAP…PPPR), and 1198–1230 (PPTPPGAPAPPMPPGVPGGPPPPPGGRGLPAPP). An FH2 domain is found at 1247-1646 (NSAATARRST…KAQKEAEKEA (400 aa)).

It belongs to the formin-like family. Class-II subfamily.

The sequence is that of Formin-like protein 12 (FH12) from Oryza sativa subsp. japonica (Rice).